We begin with the raw amino-acid sequence, 91 residues long: Ribonuclease P protein component 4 (91 aa).

The Zn(2+) site is built by C48, C51, C71, and C74.

Belongs to the eukaryotic/archaeal RNase P protein component 4 family. In terms of assembly, consists of a catalytic RNA component and at least 4-5 protein subunits. It depends on Zn(2+) as a cofactor.

The protein localises to the cytoplasm. The enzyme catalyses Endonucleolytic cleavage of RNA, removing 5'-extranucleotides from tRNA precursor.. Its function is as follows. Part of ribonuclease P, a protein complex that generates mature tRNA molecules by cleaving their 5'-ends. The chain is Ribonuclease P protein component 4 from Picrophilus torridus (strain ATCC 700027 / DSM 9790 / JCM 10055 / NBRC 100828 / KAW 2/3).